Reading from the N-terminus, the 966-residue chain is Catenin alpha-2 (966 aa).

Basic and acidic residues predominate over residues Pro924 to Thr940. Residues Pro924–Ser952 form a disordered region. Basic residues predominate over residues Arg941–Ile951.

The protein belongs to the vinculin/alpha-catenin family.

It localises to the cell membrane. Its subcellular location is the cytoplasm. The protein localises to the cytoskeleton. It is found in the cell junction. The protein resides in the adherens junction. It localises to the cell projection. Its subcellular location is the axon. The protein localises to the nucleus. May function as a linker between cadherin adhesion receptors and the cytoskeleton to regulate cell-cell adhesion and differentiation in the nervous system. This Xenopus laevis (African clawed frog) protein is Catenin alpha-2 (ctnna2).